The following is a 957-amino-acid chain: Glycine dehydrogenase (decarboxylating) (957 aa).

Lys-708 bears the N6-(pyridoxal phosphate)lysine mark.

The protein belongs to the GcvP family. The glycine cleavage system is composed of four proteins: P, T, L and H. Requires pyridoxal 5'-phosphate as cofactor.

It carries out the reaction N(6)-[(R)-lipoyl]-L-lysyl-[glycine-cleavage complex H protein] + glycine + H(+) = N(6)-[(R)-S(8)-aminomethyldihydrolipoyl]-L-lysyl-[glycine-cleavage complex H protein] + CO2. The glycine cleavage system catalyzes the degradation of glycine. The P protein binds the alpha-amino group of glycine through its pyridoxal phosphate cofactor; CO(2) is released and the remaining methylamine moiety is then transferred to the lipoamide cofactor of the H protein. In Escherichia coli (strain K12 / MC4100 / BW2952), this protein is Glycine dehydrogenase (decarboxylating).